Reading from the N-terminus, the 206-residue chain is Protein GET1 (206 aa).

Residues 1 to 4 (MPSL) are Lumenal-facing. A helical transmembrane segment spans residues 5–24 (LITVLFLNVIIYVVNTVGAA). Topologically, residues 25–110 (TVDGLLWLLY…TFDMTIKIAR (86 aa)) are cytoplasmic. A coiled-coil region spans residues 75 to 100 (AKLRRRHDKALEAYEAKNNELTQSKS). Residues 111–131 (WAATSGLMLFLQFWYSKTPIF) form a helical membrane-spanning segment. The Lumenal segment spans residues 132-155 (TLPPGWIPWQVQWVLSFPRAPMGT). The helical transmembrane segment at 156–172 (VSIQIWGGACATVVALV) threads the bilayer. At 173–206 (GDAMKASLAYVSKPKIDRIKLGATMEGKEGKKRQ) the chain is on the cytoplasmic side.

The protein belongs to the WRB/GET1 family. Interacts with GET3.

It is found in the endoplasmic reticulum membrane. In terms of biological role, required for the post-translational delivery of tail-anchored (TA) proteins to the endoplasmic reticulum. Acts as a membrane receptor for soluble GET3, which recognizes and selectively binds the transmembrane domain of TA proteins in the cytosol. This Ajellomyces capsulatus (strain G186AR / H82 / ATCC MYA-2454 / RMSCC 2432) (Darling's disease fungus) protein is Protein GET1.